Here is a 123-residue protein sequence, read N- to C-terminus: Nitrogen regulatory protein GlnK2 (123 aa).

ATP contacts are provided by residues 38–40 (SLT) and Ser49. Ser49 is a binding site for ADP. Position 62 is an O-UMP-tyrosine (Tyr62). Residues Val75, 98–101 (GDGK), and Arg114 contribute to the ATP site. 98–101 (GDGK) is an ADP binding site. Position 98 to 101 (98 to 101 (GDGK)) interacts with AMP.

It belongs to the P(II) protein family. Homotrimer. Interacts with the glutamine synthetase 3 (GS3) in the presence of 2-oxoglutarate. Interacts in vitro with Amt1 after ammonium shock. May also interact with Amt2. In terms of processing, uridylylated on Tyr-62.

It localises to the cytoplasm. Its activity is regulated as follows. Binds the effectors ADP and ATP. Also binds AMP with high affinity, raising the possibility that AMP could be an important PII effector, at least in archaea. The change in the ATP/AMP ratio may be more relevant for describing the energy status in the cells than the ATP/ADP ratio alone. Involved in the regulation of nitrogen metabolism. Regulates the activity of its targets by protein-protein interaction in response to the nitrogen status of the cell. Increases the activity of the glutamine synthetase 3 in the presence of 2-oxoglutarate. May regulate the activity of the ammonia channel Amt2 via direct interaction. This is Nitrogen regulatory protein GlnK2 from Haloferax mediterranei (strain ATCC 33500 / DSM 1411 / JCM 8866 / NBRC 14739 / NCIMB 2177 / R-4) (Halobacterium mediterranei).